We begin with the raw amino-acid sequence, 88 residues long: Sec-independent protein translocase protein TatA (88 aa).

Residues 1–21 (MGSIGWAQLLIIAVIVVLLFG) traverse the membrane as a helical segment. Positions 41 to 88 (KAMGDDSQTPPTNVDKTSNDADFAKSITEKQQPVAKAEESKSHEKEQG) are disordered. Positions 46-56 (DSQTPPTNVDK) are enriched in polar residues. Over residues 76 to 88 (KAEESKSHEKEQG) the composition is skewed to basic and acidic residues.

Belongs to the TatA/E family. The Tat system comprises two distinct complexes: a TatABC complex, containing multiple copies of TatA, TatB and TatC subunits, and a separate TatA complex, containing only TatA subunits. Substrates initially bind to the TatABC complex, which probably triggers association of the separate TatA complex to form the active translocon.

It is found in the cell inner membrane. Functionally, part of the twin-arginine translocation (Tat) system that transports large folded proteins containing a characteristic twin-arginine motif in their signal peptide across membranes. TatA could form the protein-conducting channel of the Tat system. This chain is Sec-independent protein translocase protein TatA, found in Yersinia pestis.